The sequence spans 309 residues: Ribonuclease Z (309 aa).

Zn(2+) is bound by residues histidine 63, histidine 65, aspartate 67, histidine 68, histidine 145, aspartate 216, and histidine 274. The Proton acceptor role is filled by aspartate 67.

Belongs to the RNase Z family. In terms of assembly, homodimer. Zn(2+) serves as cofactor.

The enzyme catalyses Endonucleolytic cleavage of RNA, removing extra 3' nucleotides from tRNA precursor, generating 3' termini of tRNAs. A 3'-hydroxy group is left at the tRNA terminus and a 5'-phosphoryl group is left at the trailer molecule.. In terms of biological role, zinc phosphodiesterase, which displays some tRNA 3'-processing endonuclease activity. Probably involved in tRNA maturation, by removing a 3'-trailer from precursor tRNA. This Streptococcus mutans serotype c (strain ATCC 700610 / UA159) protein is Ribonuclease Z.